Consider the following 284-residue polypeptide: Proteasome subunit pbs-5 (284 aa).

A propeptide spans 1–64 (MWGETFDDFE…AGKSMQFRKG (64 aa)) (removed in mature form). Thr-65 serves as the catalytic Nucleophile.

It belongs to the peptidase T1B family. The 26S proteasome consists of a 20S proteasome core and two 19S regulatory subunits. The 20S proteasome core is composed of 28 subunits that are arranged in four stacked rings, resulting in a barrel-shaped structure. The two end rings are each formed by seven alpha subunits, and the two central rings are each formed by seven beta subunits. The catalytic chamber with the active sites is on the inside of the barrel.

It is found in the cytoplasm. The protein localises to the nucleus. It catalyses the reaction Cleavage of peptide bonds with very broad specificity.. Functionally, component of the 20S core proteasome complex involved in the proteolytic degradation of most intracellular proteins. This complex plays numerous essential roles within the cell by associating with different regulatory particles. Associated with two 19S regulatory particles, forms the 26S proteasome and thus participates in the ATP-dependent degradation of ubiquitinated proteins. The 26S proteasome plays a key role in the maintenance of protein homeostasis by removing misfolded or damaged proteins that could impair cellular functions, and by removing proteins whose functions are no longer required. The polypeptide is Proteasome subunit pbs-5 (Caenorhabditis elegans).